Here is an 88-residue protein sequence, read N- to C-terminus: Small ribosomal subunit protein bS20 (88 aa).

Positions 1–21 are disordered; sequence MANTTSAKKATRKIARRTAVN.

Belongs to the bacterial ribosomal protein bS20 family.

Its function is as follows. Binds directly to 16S ribosomal RNA. This Agrobacterium fabrum (strain C58 / ATCC 33970) (Agrobacterium tumefaciens (strain C58)) protein is Small ribosomal subunit protein bS20.